The primary structure comprises 766 residues: 5-methyltetrahydropteroyltriglutamate--homocysteine methyltransferase (766 aa).

5-methyltetrahydropteroyltri-L-glutamate is bound by residues 16–19 (RELK) and Lys119. L-homocysteine is bound by residues 440–442 (IGS) and Glu493. Residues 440-442 (IGS) and Glu493 contribute to the L-methionine site. 5-methyltetrahydropteroyltri-L-glutamate-binding positions include 524–525 (RC) and Trp570. Asp608 is a binding site for L-homocysteine. Position 608 (Asp608) interacts with L-methionine. Glu614 lines the 5-methyltetrahydropteroyltri-L-glutamate pocket. Residues His650, Cys652, and Glu674 each contribute to the Zn(2+) site. The Proton donor role is filled by His703. Cys735 contributes to the Zn(2+) binding site.

The protein belongs to the vitamin-B12 independent methionine synthase family. The cofactor is Zn(2+).

The catalysed reaction is 5-methyltetrahydropteroyltri-L-glutamate + L-homocysteine = tetrahydropteroyltri-L-glutamate + L-methionine. The protein operates within amino-acid biosynthesis; L-methionine biosynthesis via de novo pathway; L-methionine from L-homocysteine (MetE route): step 1/1. In terms of biological role, catalyzes the transfer of a methyl group from 5-methyltetrahydrofolate to homocysteine resulting in methionine formation. The chain is 5-methyltetrahydropteroyltriglutamate--homocysteine methyltransferase from Pseudomonas aeruginosa (strain ATCC 15692 / DSM 22644 / CIP 104116 / JCM 14847 / LMG 12228 / 1C / PRS 101 / PAO1).